Consider the following 691-residue polypeptide: Glycine--tRNA ligase beta subunit (691 aa).

The protein belongs to the class-II aminoacyl-tRNA synthetase family. As to quaternary structure, tetramer of two alpha and two beta subunits.

Its subcellular location is the cytoplasm. The catalysed reaction is tRNA(Gly) + glycine + ATP = glycyl-tRNA(Gly) + AMP + diphosphate. This Levilactobacillus brevis (strain ATCC 367 / BCRC 12310 / CIP 105137 / JCM 1170 / LMG 11437 / NCIMB 947 / NCTC 947) (Lactobacillus brevis) protein is Glycine--tRNA ligase beta subunit.